An 82-amino-acid polypeptide reads, in one-letter code: Small ribosomal subunit protein bS16 (82 aa).

The protein belongs to the bacterial ribosomal protein bS16 family.

In Cyanothece sp. (strain PCC 7425 / ATCC 29141), this protein is Small ribosomal subunit protein bS16.